A 408-amino-acid polypeptide reads, in one-letter code: Solute carrier family 35 member F1 (408 aa).

The disordered stretch occupies residues 1–20 (MIPPEPPQPQLQPPPPPAPP). 10 helical membrane passes run 60 to 80 (MLISVALGQVLSLLVCGIGLT), 94 to 114 (VFQSFLNYILLFLVYTTTLAV), 129 to 147 (WWKYMILGLIDLEANYLVV), 159 to 179 (QLLDCFVIPVVILLSWFFLLI), 186 to 206 (FIGIVVCILGMGCMVGADVLV), 221 to 241 (LLVLGGATLYGISNVWEESII), 247 to 267 (VEFLGMIGLFGAFFSGIQLAI), 284 to 304 (LLYVGFSACMFGLYSFMPVVI), 311 to 331 (SVNLSLLTADLYSLFCGLFLF), and 335 to 355 (FSGLYLLSFFTILIGLVLYSS).

This sequence belongs to the SLC35F solute transporter family.

The protein localises to the cytoplasmic vesicle. It is found in the secretory vesicle. It localises to the synaptic vesicle membrane. Its function is as follows. Putative solute transporter. This is Solute carrier family 35 member F1 (Slc35f1) from Mus musculus (Mouse).